The sequence spans 338 residues: mRNA decay activator protein ZFP36L1 (338 aa).

The necessary and sufficient for the association with mRNA decay enzymes and mRNA decay activation stretch occupies residues 1–111; it reads MTTTLVSATI…QKQPGSGQVN (111 aa). Ser54 carries the phosphoserine; by MAPKAPK2 modification. The interval 71–113 is disordered; it reads LKGEPAPSLSSRDSRFRDRSFSEGGERLLPTQKQPGSGQVNSS. A compositionally biased stretch (basic and acidic residues) spans 82-96; sequence RDSRFRDRSFSEGGE. At Ser90 the chain carries Phosphoserine; by PKB/AKT1. Ser92 is subject to Phosphoserine; by PKB/AKT1 and MAPKAPK2. A compositionally biased stretch (polar residues) spans 101–113; the sequence is TQKQPGSGQVNSS. 2 consecutive C3H1-type zinc fingers follow at residues 114-142 and 152-180; these read RYKTELCRPFEENGACKYGDKCQFAHGIH and KYKTELCRTFHTIGFCPYGPRCHFIHNAE. The interval 185 to 338 is necessary for mRNA decay activation; sequence LAGGRDLSAD…IFSRLSISDD (154 aa). Ser203 carries the phosphoserine; by PKB/AKT1 and MAPKAPK2 modification. Positions 273–338 are disordered; sequence SPTTFLFRPM…IFSRLSISDD (66 aa). A compositionally biased stretch (low complexity) spans 305–318; sequence YLSSSSSSHSGSDS. Residue Ser318 is modified to Phosphoserine. Ser334 bears the Phosphoserine; by RPS6KA1 mark.

In terms of assembly, associates with the cytoplasmic CCR4-NOT deadenylase and RNA exosome complexes to trigger ARE-containing mRNA deadenylation and decay processes. Interacts with CNOT1. Interacts (via N-terminus) with CNOT6. Interacts with CNOT7; this interaction is inhibited in response to phorbol 12-myristate 13-acetate (PMA) treatment in a p38 MAPK-dependent manner. Interacts with DCP1A. Interacts (via N-terminus) with DCP2. Interacts (via N-terminus) with EXOSC2. Interacts with XRN1. Interacts (via phosphorylated form) with YWHAB; this interaction occurs in a protein kinase AKT1-dependent manner. Interacts (via phosphorylated form) with YWHAZ; this interaction occurs in a p38 MAPK- and AKT-signaling pathways. In terms of processing, phosphorylated. Phosphorylated by RPS6KA1 at Ser-334 upon phorbol 12-myristate 13-acetate (PMA) treatment; this phosphorylation results in dissociation of the CCR4-NOT deadenylase complex and induces p38 MAPK-mediated stabilization of the low-density lipoprotein receptor LDLR mRNA. Phosphorylated by protein kinase AKT1 at Ser-92 and Ser-203 in response to insulin; these phosphorylations stabilize ZFP36L1, increase the association with 14-3-3 proteins and mediate ARE-containing mRNA stabilization. AKT1-mediated phosphorylation at Ser-92 does not impair ARE-containing RNA-binding. Phosphorylated at Ser-54, Ser-92 and Ser-203 by MAPKAPK2; these phosphorylations increase the association with 14-3-3 proteins and mediate ARE-containing mRNA stabilization in a protein kinase AKT1-independent manner. MAPKAPK2-mediated phosphorylations at Ser-54, Ser-92 and Ser-203 do not impair ARE-containing RNA-binding. Phosphorylations increase the association with 14-3-3 proteins and mediate ARE-containing mRNA stabilization during early adipogenesis in a p38 MAPK- and AKT-dependent manner. Post-translationally, ubiquitinated. Ubiquitination leads to proteasomal degradation, a process inhibited by phosphorylations at Ser-90, Ser-92 and Ser-203. As to expression, expressed in preadipocytes and adipocytes. Expressed in the proximal and distal tubules in the renal cortex (at protein level). Expressed in ovary, heart, kidney, lung, spleen and thymus. Weakly expressed in brain, liver and testis. Expressed in osteoblasts. Expressed in embryonic stem cells (ESCs). Expressed through B lymphocyte development.

The protein resides in the nucleus. The protein localises to the cytoplasm. It localises to the cytoplasmic granule. It is found in the P-body. In terms of biological role, zinc-finger RNA-binding protein that destabilizes several cytoplasmic AU-rich element (ARE)-containing mRNA transcripts by promoting their poly(A) tail removal or deadenylation, and hence provide a mechanism for attenuating protein synthesis. Acts as a 3'-untranslated region (UTR) ARE mRNA-binding adapter protein to communicate signaling events to the mRNA decay machinery. Functions by recruiting the CCR4-NOT deadenylating complex and components of the cytoplasmic RNA decay machinery to the bound ARE-containing mRNAs, and hence promotes ARE-mediated mRNA deadenylation and decay processes. Also induces the degradation of ARE-containing mRNAs even in absence of poly(A) tail. Binds to 3'-UTR ARE of numerous mRNAs. Positively regulates early adipogenesis by promoting ARE-mediated mRNA decay of immediate early genes (IEGs). Promotes ARE-mediated mRNA decay of mineralocorticoid receptor NR3C2 mRNA in response to hypertonic stress. Negatively regulates hematopoietic/erythroid cell differentiation by promoting ARE-mediated mRNA decay of the transcription factor STAT5B mRNA. Positively regulates monocyte/macrophage cell differentiation by promoting ARE-mediated mRNA decay of the cyclin-dependent kinase CDK6 mRNA. Promotes degradation of ARE-containing pluripotency-associated mRNAs in embryonic stem cells (ESCs), such as NANOG, through a fibroblast growth factor (FGF)-induced MAPK-dependent signaling pathway, and hence attenuates ESC self-renewal and positively regulates mesendoderm differentiation. May play a role in mediating pro-apoptotic effects in malignant B-cells by promoting ARE-mediated mRNA decay of BCL2 mRNA. In association with ZFP36L2 maintains quiescence on developing B lymphocytes by promoting ARE-mediated decay of several mRNAs encoding cell cycle regulators that help B cells progress through the cell cycle, and hence ensuring accurate variable-diversity-joining (VDJ) recombination and functional immune cell formation. Together with ZFP36L2 is also necessary for thymocyte development and prevention of T-cell acute lymphoblastic leukemia (T-ALL) transformation by promoting ARE-mediated mRNA decay of the oncogenic transcription factor NOTCH1 mRNA. Involved in the delivery of target ARE-mRNAs to processing bodies (PBs). In addition to its cytosolic mRNA-decay function, plays a role in the regulation of nuclear mRNA 3'-end processing; modulates mRNA 3'-end maturation efficiency of the DLL4 mRNA through binding with an ARE embedded in a weak noncanonical polyadenylation (poly(A)) signal in endothelial cells. Also involved in the regulation of stress granule (SG) and P-body (PB) formation and fusion. Plays a role in vasculogenesis and endocardial development. Involved in the regulation of keratinocyte proliferation, differentiation and apoptosis. Plays a role in myoblast cell differentiation. This chain is mRNA decay activator protein ZFP36L1, found in Mus musculus (Mouse).